A 112-amino-acid chain; its full sequence is cAMP-regulated phosphoprotein 19 (112 aa).

An N-acetylmethionine modification is found at Met-1. Residues 1-11 are compositionally biased toward low complexity; that stretch reads MSAEVPEAASA. The disordered stretch occupies residues 1–49; that stretch reads MSAEVPEAASAEEQKEMEDKVTSPEKAEEAKLKARYPHLGQKPGGSDFL. Ser-2 bears the N-acetylserine mark. 2 positions are modified to phosphoserine: Ser-2 and Ser-23. Over residues 12-32 the composition is skewed to basic and acidic residues; the sequence is EEQKEMEDKVTSPEKAEEAKL. 2 positions are modified to phosphoserine; by GWL: Ser-62 and Ser-104. The interval 74 to 112 is disordered; that stretch reads NKQLPAAAPDKTEVTGDHIPTPQDLPQRKPSLVASKLAG. Ser-104 carries the post-translational modification Phosphoserine; by PKA. Lys-109 is subject to N6-acetyllysine.

The protein belongs to the endosulfine family. Interacts (when phosphorylated at Ser-62) with PPP2R2D. Interacts with SNCA. Interacts with PPP2R2A; the interaction is direct and this interaction inhibits PP2A activity. Post-translationally, phosphorylation at Ser-62 by MASTL/GWL during mitosis is essential for interaction with PPP2R2D (PR55-delta) and subsequent inactivation of PP2A. Phosphorylated by PKA.

The protein localises to the cytoplasm. Its function is as follows. Protein phosphatase inhibitor that specifically inhibits protein phosphatase 2A (PP2A) during mitosis. Inhibition of PP2A is enhanced when ARPP19 is phosphorylated. When phosphorylated at Ser-62 during mitosis, specifically interacts with PPP2R2D (PR55-delta) and inhibits its activity, leading to inactivation of PP2A, an essential condition to keep cyclin-B1-CDK1 activity high during M phase. May indirectly enhance GAP-43 expression by binding to the NGF-regulatory region of its mRNA. This chain is cAMP-regulated phosphoprotein 19 (Arpp19), found in Mus musculus (Mouse).